A 395-amino-acid chain; its full sequence is Probable G-protein coupled receptor npr-29 (395 aa).

4 helical membrane passes run 38–58 (VVGFVINAWVLYVVAPLLFAP), 66–86 (ILFYIFALCVGDLMTMIAMLL), 89–109 (IELVFGTWQFSSMVCTSYLIF), and 148–168 (AIIQFCIAFAFVMILLWPVFA). N-linked (GlcNAc...) asparagine glycosylation occurs at N180. 3 helical membrane passes run 202 to 222 (FWFNLIACITSYAVPLFGIIY), 252 to 272 (VITTVLLLTVIYVLCWTPYWV), and 287 to 307 (IIIISYFIHLLPYISCVAYPL).

The protein belongs to the G-protein coupled receptor 1 family.

It is found in the cell membrane. In terms of biological role, not known. Putative receptor. The protein is Probable G-protein coupled receptor npr-29 of Caenorhabditis elegans.